We begin with the raw amino-acid sequence, 142 residues long: Large ribosomal subunit protein uL13 (142 aa).

Belongs to the universal ribosomal protein uL13 family. Part of the 50S ribosomal subunit.

In terms of biological role, this protein is one of the early assembly proteins of the 50S ribosomal subunit, although it is not seen to bind rRNA by itself. It is important during the early stages of 50S assembly. This is Large ribosomal subunit protein uL13 from Lachnospira eligens (strain ATCC 27750 / DSM 3376 / VPI C15-48 / C15-B4) (Eubacterium eligens).